Consider the following 421-residue polypeptide: Testin (421 aa).

The PET domain maps to M92–D199. The segment at E133–C164 is disordered. Residues P155–C164 are compositionally biased toward basic and acidic residues. LIM zinc-binding domains are found at residues Y234–E297, P299–V359, and Q362–S421.

Belongs to the prickle / espinas / testin family. In terms of assembly, interacts via LIM domain 1 with ZYX. Interacts (via LIM domain 3) with ENAH and VASP. Interacts with ALKBH4, talin, actin, alpha-actinin, GRIP1 and PXN. Interacts (via LIM domain 2) with ACTL7A (via N-terminus). Heterodimer with ACTL7A; the heterodimer interacts with ENAH to form a heterotrimer.

The protein resides in the cytoplasm. It is found in the cell junction. The protein localises to the focal adhesion. In terms of biological role, scaffold protein that may play a role in cell adhesion, cell spreading and in the reorganization of the actin cytoskeleton. Plays a role in the regulation of cell proliferation. May act as a tumor suppressor. This chain is Testin (TES), found in Colobus guereza (Mantled guereza).